The primary structure comprises 258 residues: Ciliogenesis and planar polarity effector 2 (258 aa).

Residues 50–258 (SIDTASYKIF…LPNPPESAPE (209 aa)) form a small GTPase-like region. GTP contacts are provided by serine 64, glycine 65, glycine 67, lysine 68, threonine 69, alanine 70, valine 82, histidine 84, threonine 87, lysine 176, aspartate 178, and serine 206.

Belongs to the small GTPase superfamily. Rab family. Interacts with FUZ. Associates with the CPLANE (ciliogenesis and planar polarity effectors) complex via its interaction with FUZ.

It localises to the cytoplasm. The protein localises to the cytoskeleton. Its subcellular location is the cilium basal body. It is found in the microtubule organizing center. The protein resides in the centrosome. It localises to the centriole. Required for efficient primary cilia initiation, regulating a late step in cilia initiation. Plays a role in the final maturation of the mother centriole and ciliary vesicle that allows extension of the ciliary axoneme. This chain is Ciliogenesis and planar polarity effector 2, found in Homo sapiens (Human).